Consider the following 111-residue polypeptide: Aspartate 1-decarboxylase (111 aa).

Residue Ser25 is the Schiff-base intermediate with substrate; via pyruvic acid of the active site. Ser25 bears the Pyruvic acid (Ser) mark. Residue Thr57 coordinates substrate. Tyr58 functions as the Proton donor in the catalytic mechanism. Residue 73-75 (GPA) participates in substrate binding.

This sequence belongs to the PanD family. In terms of assembly, heterooctamer of four alpha and four beta subunits. Pyruvate is required as a cofactor. Is synthesized initially as an inactive proenzyme, which is activated by self-cleavage at a specific serine bond to produce a beta-subunit with a hydroxyl group at its C-terminus and an alpha-subunit with a pyruvoyl group at its N-terminus.

It is found in the cytoplasm. It catalyses the reaction L-aspartate + H(+) = beta-alanine + CO2. The protein operates within cofactor biosynthesis; (R)-pantothenate biosynthesis; beta-alanine from L-aspartate: step 1/1. Functionally, catalyzes the pyruvoyl-dependent decarboxylation of aspartate to produce beta-alanine. In Francisella tularensis subsp. novicida (strain U112), this protein is Aspartate 1-decarboxylase.